The following is a 260-amino-acid chain: NAD-dependent protein deacetylase (260 aa).

One can recognise a Deacetylase sirtuin-type domain in the interval 9 to 260 (DDIDGETLDA…QVLPAIVERL (252 aa)). Positions 35, 39, 46, 47, 114, 116, 117, and 132 each coordinate NAD(+). Position 46 (Phe46) interacts with nicotinamide. Nicotinamide is bound by residues Ile116 and Asp117. The active-site Proton acceptor is His132. Residues Cys140, Cys143, Cys166, and Cys168 each coordinate Zn(2+). Residues Ser206, Ser207, Asn231, Asp248, and Val249 each coordinate NAD(+).

This sequence belongs to the sirtuin family. Class U subfamily. It depends on Zn(2+) as a cofactor.

It is found in the cytoplasm. The catalysed reaction is N(6)-acetyl-L-lysyl-[protein] + NAD(+) + H2O = 2''-O-acetyl-ADP-D-ribose + nicotinamide + L-lysyl-[protein]. Its function is as follows. NAD-dependent protein deacetylase which modulates the activities of several enzymes which are inactive in their acetylated form. Deacetylates the N-terminal lysine residue of Alba, the major archaeal chromatin protein and that, in turn, increases Alba's DNA binding affinity, thereby repressing transcription. The chain is NAD-dependent protein deacetylase from Haloarcula marismortui (strain ATCC 43049 / DSM 3752 / JCM 8966 / VKM B-1809) (Halobacterium marismortui).